We begin with the raw amino-acid sequence, 523 residues long: GMP synthase [glutamine-hydrolyzing] (523 aa).

Residues 8–205 (KILILDFGSQ…VVNICGCTTN (198 aa)) form the Glutamine amidotransferase type-1 domain. C85 serves as the catalytic Nucleophile. Catalysis depends on residues H179 and E181. One can recognise a GMPS ATP-PPase domain in the interval 206–398 (WTPENIIEDA…LGLPAEMLNR (193 aa)). 233–239 (SGGVDSS) contacts ATP.

In terms of assembly, homodimer.

It catalyses the reaction XMP + L-glutamine + ATP + H2O = GMP + L-glutamate + AMP + diphosphate + 2 H(+). It participates in purine metabolism; GMP biosynthesis; GMP from XMP (L-Gln route): step 1/1. Catalyzes the synthesis of GMP from XMP. This is GMP synthase [glutamine-hydrolyzing] from Mannheimia succiniciproducens (strain KCTC 0769BP / MBEL55E).